Here is a 153-residue protein sequence, read N- to C-terminus: uncharacterized protein (153 aa).

The N-terminal stretch at methionine 1 to alanine 22 is a signal peptide. Cysteine 23 carries the N-palmitoyl cysteine lipid modification. A lipid anchor (S-diacylglycerol cysteine) is attached at cysteine 23. Residues leucine 121–lysine 153 form a disordered region. Residues serine 135 to lysine 153 are compositionally biased toward basic and acidic residues.

This sequence to E.coli YehR.

The protein localises to the cell membrane. This is an uncharacterized protein from Listeria innocua serovar 6a (strain ATCC BAA-680 / CLIP 11262).